A 1046-amino-acid polypeptide reads, in one-letter code: Translation initiation factor IF-2 (1046 aa).

Residues 49-448 form a disordered region; sequence EAFPAEGSAP…MGAMVPRGNG (400 aa). A compositionally biased stretch (low complexity) spans 52 to 71; that stretch reads PAEGSAPSSRPGGRPGNGAR. A compositionally biased stretch (pro residues) spans 94–111; sequence RPGPGGRPVPGRPGPAPL. 2 stretches are compositionally biased toward low complexity: residues 112-139 and 147-159; these read PGAS…SQPV and PRPA…AAAP. Over residues 160 to 176 the composition is skewed to pro residues; sequence APAPSAPAPAPSAPAPA. Residues 177–187 show a composition bias toward low complexity; that stretch reads PITSAPTAATP. Over residues 188–206 the composition is skewed to pro residues; sequence PAAPQRPTPGGPRPGPAAP. The segment covering 210-222 has biased composition (gly residues); sequence RTGGPGGPGGPGG. Residues 223 to 235 show a composition bias toward pro residues; that stretch reads GPRPGPRPGPRPA. A compositionally biased stretch (low complexity) spans 244-253; sequence SPAAGPRAAS. Pro residues-rich tracts occupy residues 260–281 and 304–314; these read SAPP…PRPG and RPTPGQMPPRP. Residues 320-333 show a composition bias toward low complexity; it reads PRPNSNMFQPRPAG. The span at 334–414 shows a compositional bias: gly residues; it reads GAPGRPGGGG…AGAFGPGGRG (81 aa). Over residues 415 to 426 the composition is skewed to basic residues; it reads RPGRQRKSKRAK. Positions 539 to 711 constitute a tr-type G domain; the sequence is ARPPVVTVMG…VILTADASLD (173 aa). The tract at residues 548 to 555 is G1; that stretch reads GHVDHGKT. A GTP-binding site is contributed by 548-555; that stretch reads GHVDHGKT. The tract at residues 573-577 is G2; sequence GITQH. Residues 598-601 form a G3 region; that stretch reads DTPG. Residues 598–602 and 652–655 contribute to the GTP site; these read DTPGH and NKVD. The tract at residues 652–655 is G4; sequence NKVD. A G5 region spans residues 688-690; sequence SAR.

This sequence belongs to the TRAFAC class translation factor GTPase superfamily. Classic translation factor GTPase family. IF-2 subfamily.

It localises to the cytoplasm. Functionally, one of the essential components for the initiation of protein synthesis. Protects formylmethionyl-tRNA from spontaneous hydrolysis and promotes its binding to the 30S ribosomal subunits. Also involved in the hydrolysis of GTP during the formation of the 70S ribosomal complex. The polypeptide is Translation initiation factor IF-2 (Parafrankia sp. (strain EAN1pec)).